Here is a 691-residue protein sequence, read N- to C-terminus: Hormonally up-regulated neu tumor-associated kinase homolog A (691 aa).

The Protein kinase domain occupies 55–313 (YLIGRKLGEG…IQQALANRWL (259 aa)). ATP is bound by residues 61–69 (LGEGSFAKV) and K84. The active-site Proton acceptor is D179. The span at 406–425 (MNKNSYEERRSKDLEKRGEP) shows a compositional bias: basic and acidic residues. Disordered regions lie at residues 406 to 475 (MNKN…GGLS), 499 to 518 (QSPD…HSQE), 580 to 640 (FQFD…SRGR), and 655 to 679 (QVVS…SPGY). The segment covering 440-453 (SHRQNACLTPQGHS) has biased composition (polar residues). Basic and acidic residues predominate over residues 457 to 470 (PVKERRSSKSERES). A compositionally biased stretch (polar residues) spans 582–597 (FDNTSPSKSHFNQASF). Low complexity predominate over residues 604–620 (SPSSPESMSPTSPHSPS). Residues 621–631 (CNNNISGNLGS) show a composition bias toward polar residues.

The protein belongs to the protein kinase superfamily. CAMK Ser/Thr protein kinase family. SNF1 subfamily.

The catalysed reaction is L-seryl-[protein] + ATP = O-phospho-L-seryl-[protein] + ADP + H(+). It catalyses the reaction L-threonyl-[protein] + ATP = O-phospho-L-threonyl-[protein] + ADP + H(+). The chain is Hormonally up-regulated neu tumor-associated kinase homolog A (hunk-a) from Xenopus laevis (African clawed frog).